The chain runs to 164 residues: Lipoprotein signal peptidase (164 aa).

Helical transmembrane passes span 11-31, 41-61, 64-84, and 92-112; these read YWVLALAAIVLDQWSKWAVLS, VIPSFFDLTLVYNPGAAFSFL, QGGWQKYFFLVLAVAVSAYLV, and FATLGKTGAAMIIGGALGNVI. Residues Asp122 and Asp140 contribute to the active site. The chain crosses the membrane as a helical span at residues 132-152; sequence FYPAFNIADSFICVGAVLAVL.

This sequence belongs to the peptidase A8 family.

It is found in the cell inner membrane. It carries out the reaction Release of signal peptides from bacterial membrane prolipoproteins. Hydrolyzes -Xaa-Yaa-Zaa-|-(S,diacylglyceryl)Cys-, in which Xaa is hydrophobic (preferably Leu), and Yaa (Ala or Ser) and Zaa (Gly or Ala) have small, neutral side chains.. It participates in protein modification; lipoprotein biosynthesis (signal peptide cleavage). Functionally, this protein specifically catalyzes the removal of signal peptides from prolipoproteins. The polypeptide is Lipoprotein signal peptidase (Neisseria meningitidis serogroup C (strain 053442)).